The sequence spans 500 residues: Cytochrome P450 11B2, mitochondrial (500 aa).

A mitochondrion-targeting transit peptide spans 1-24; that stretch reads MALRVTADVWLARPWQCLHRTRAL. Phe381 contributes to the 21-hydroxyprogesterone binding site. Cys447 serves as a coordination point for heme.

Belongs to the cytochrome P450 family. Heme is required as a cofactor.

The protein localises to the mitochondrion inner membrane. It carries out the reaction a steroid + 2 reduced [adrenodoxin] + O2 + 2 H(+) = an 11beta-hydroxysteroid + 2 oxidized [adrenodoxin] + H2O. The catalysed reaction is 21-hydroxyprogesterone + 2 reduced [adrenodoxin] + O2 + 2 H(+) = corticosterone + 2 oxidized [adrenodoxin] + H2O. The enzyme catalyses corticosterone + 2 reduced [adrenodoxin] + O2 + 2 H(+) = 18-hydroxycorticosterone + 2 oxidized [adrenodoxin] + H2O. It catalyses the reaction 18-hydroxycorticosterone + 2 reduced [adrenodoxin] + O2 + 2 H(+) = aldosterone + 2 oxidized [adrenodoxin] + 2 H2O. It carries out the reaction 11-deoxycortisol + 2 reduced [adrenodoxin] + O2 + 2 H(+) = cortisol + 2 oxidized [adrenodoxin] + H2O. The catalysed reaction is 21-hydroxyprogesterone + 2 reduced [adrenodoxin] + O2 + 2 H(+) = 18-hydroxy-11-deoxycorticosterone + 2 oxidized [adrenodoxin] + H2O. The enzyme catalyses cortisol + 2 reduced [adrenodoxin] + O2 + 2 H(+) = 18-hydroxycortisol + 2 oxidized [adrenodoxin] + H2O. It catalyses the reaction 18-hydroxycortisol + 2 reduced [adrenodoxin] + O2 + 2 H(+) = 18-oxocortisol + 2 oxidized [adrenodoxin] + 2 H2O. Its pathway is steroid biosynthesis. Its function is as follows. A cytochrome P450 monooxygenase that catalyzes the biosynthesis of aldosterone, the main mineralocorticoid in the human body responsible for salt and water homeostasis, thus involved in blood pressure regulation, arterial hypertension, and the development of heart failure. Catalyzes three sequential oxidative reactions of 11-deoxycorticosterone (21-hydroxyprogesterone), namely 11-beta hydroxylation, followed by two successive oxidations at C18 yielding 18-hydroxy and then 18-oxo intermediates (that would not leave the enzyme active site during the consecutive hydroxylation reactions), ending with the formation of aldosterone. Can also produce 18-hydroxycortisol and 18-oxocortisol, derived from successive oxidations of cortisol at C18, normally found at very low levels, but significantly increased in primary aldosteronism, the most common form of secondary hypertension. Mechanistically, uses molecular oxygen inserting one oxygen atom into a substrate and reducing the second into a water molecule. Two electrons are provided by NADPH via a two-protein mitochondrial transfer system comprising flavoprotein FDXR (adrenodoxin/ferredoxin reductase) and nonheme iron-sulfur protein FDX1 or FDX2 (adrenodoxin/ferredoxin). Could also be involved in the androgen metabolic pathway. This Mus musculus (Mouse) protein is Cytochrome P450 11B2, mitochondrial (Cyp11b2).